A 177-amino-acid polypeptide reads, in one-letter code: Large ribosomal subunit protein uL6 (177 aa).

This sequence belongs to the universal ribosomal protein uL6 family. Part of the 50S ribosomal subunit.

This protein binds to the 23S rRNA, and is important in its secondary structure. It is located near the subunit interface in the base of the L7/L12 stalk, and near the tRNA binding site of the peptidyltransferase center. This is Large ribosomal subunit protein uL6 from Novosphingobium aromaticivorans (strain ATCC 700278 / DSM 12444 / CCUG 56034 / CIP 105152 / NBRC 16084 / F199).